The primary structure comprises 46 residues: Large ribosomal subunit protein bL36 (46 aa).

Belongs to the bacterial ribosomal protein bL36 family.

This Salmonella agona (strain SL483) protein is Large ribosomal subunit protein bL36.